Here is a 491-residue protein sequence, read N- to C-terminus: F-box/LRR-repeat protein 7 (491 aa).

The interval 1 to 79 (MGANNGKQYG…GRGSSTSSSS (79 aa)) is disordered. Residues 10–26 (GSEGKGSSSISSDVSSS) are compositionally biased toward low complexity. Over residues 27–55 (TDHTPTKAQKNVATSEDSDLSMRTLSTPS) the composition is skewed to polar residues. The 47-residue stretch at 111-157 (QASIDRLPDHSMVQIFSFLPTNQLCRCARVCRRWYNLAWDPRLWRTI) folds into the F-box domain. LRR repeat units follow at residues 170 to 195 (LKVLTRRLCQDTPNVCLMLETVTVSG), 196 to 221 (CRRLTDRGLYTIAQCCPELRRLEVSG), 222 to 247 (CYNISNEAVFDVVSLCPNLEHLDVSG), 253 to 281 (CISLTREASIKLSPLHGKQISIRYLDMTD), 282 to 307 (CFVLEDEGLHTIAAHCTQLTHLYLRR), 308 to 333 (CVRLTDEGLRYLVIYCASIKELSVSD), 334 to 359 (CRFVSDFGLREIAKLESRLRYLSIAH), 360 to 385 (CGRVTDVGIRYVAKYCSKLRYLNARG), 386 to 411 (CEGITDHGVEYLAKNCTKLKSLDIGK), 412 to 437 (CPLVSDTGLECLALNCFNLKRLSLKS), and 438 to 463 (CESITGQGLQIVAANCFDLQTLNVQD).

Belongs to the FBXL7 family. Part of the SCF (SKP1-CUL1-F-box) E3 ubiquitin-protein ligase complex SCF(FBXL7) composed of CUL1, SKP1, RBX1 and FBXL7. Interacts with AURKA; interaction takes place during mitosis but not in interphase. Interacts with BIRC5; this interaction allows BIRC5 to be polyubiquitinated by the SCF(FBXL7) E3 ubiquitin-protein ligase complex.

The protein resides in the cytoplasm. It is found in the cytoskeleton. Its subcellular location is the microtubule organizing center. The protein localises to the centrosome. It participates in protein modification; protein ubiquitination. Functionally, substrate recognition component of a SCF (SKP1-CUL1-F-box protein) E3 ubiquitin-protein ligase complex. During mitosis, it mediates the ubiquitination and subsequent proteasomal degradation of AURKA, causing mitotic arrest. It also regulates mitochondrial function by mediating the ubiquitination and proteasomal degradation of the apoptosis inhibitor BIRC5. This chain is F-box/LRR-repeat protein 7 (FBXL7), found in Homo sapiens (Human).